Consider the following 121-residue polypeptide: NAD(P)H-quinone oxidoreductase subunit M (121 aa).

It belongs to the complex I NdhM subunit family. As to quaternary structure, NDH-1 can be composed of about 15 different subunits; different subcomplexes with different compositions have been identified which probably have different functions.

The protein localises to the cellular thylakoid membrane. It carries out the reaction a plastoquinone + NADH + (n+1) H(+)(in) = a plastoquinol + NAD(+) + n H(+)(out). It catalyses the reaction a plastoquinone + NADPH + (n+1) H(+)(in) = a plastoquinol + NADP(+) + n H(+)(out). Its function is as follows. NDH-1 shuttles electrons from an unknown electron donor, via FMN and iron-sulfur (Fe-S) centers, to quinones in the respiratory and/or the photosynthetic chain. The immediate electron acceptor for the enzyme in this species is believed to be plastoquinone. Couples the redox reaction to proton translocation, and thus conserves the redox energy in a proton gradient. Cyanobacterial NDH-1 also plays a role in inorganic carbon-concentration. This chain is NAD(P)H-quinone oxidoreductase subunit M, found in Synechococcus sp. (strain JA-3-3Ab) (Cyanobacteria bacterium Yellowstone A-Prime).